Here is a 686-residue protein sequence, read N- to C-terminus: Cation channel sperm-associated protein 1 (686 aa).

The span at 1–15 shows a compositional bias: basic and acidic residues; the sequence is MDQSSRRDESYHETH. Disordered stretches follow at residues 1–57, 97–177, 207–271, and 289–318; these read MDQS…QQPY, TLPN…NRDH, DHHH…KSTA, and QSRE…RAHK. Over 1–351 the chain is Cytoplasmic; that stretch reads MDQSSRRDES…QMILSLTQSL (351 aa). Basic residues predominate over residues 25–35; the sequence is SHPHPHPHPTL. Over residues 128 to 142 the composition is skewed to basic and acidic residues; the sequence is DPNHHPHQDDPHRPS. Residues 147–160 are compositionally biased toward polar residues; the sequence is HPSSTGSHQGTTHQ. 2 stretches are compositionally biased toward basic residues: residues 211 to 229 and 235 to 244; these read EGHH…KEQR and HMHHHIHHRS. Over residues 245 to 271 the composition is skewed to polar residues; that stretch reads PSASQLSHKSHSTLATSPSHVGSKSTA. Positions 308 to 318 are enriched in basic residues; sequence QKRKKAQRAHK. A helical transmembrane segment spans residues 352 to 373; sequence GFETFIFIVVCLNTVILVAQTF. Residues 374 to 382 are Extracellular-facing; that stretch reads TELEIRGEW. A helical membrane pass occupies residues 383–404; it reads YFMVLDSIFLSIYVLEAVLKLI. Over 405 to 412 the chain is Cytoplasmic; sequence ALGLEYFY. Residues 413–435 traverse the membrane as a helical segment; it reads DPWNNLDFFIMVMAVLDFVLLQI. At 436 to 446 the chain is on the extracellular side; it reads NSLSYSFYNHS. Residues 447 to 469 form a helical membrane-spanning segment; sequence LFRILKVFKSMRALRAIRVLRRL. Over 470–487 the chain is Cytoplasmic; it reads SILTSLHEVAGTLSGSLP. Residues 488-510 form a helical membrane-spanning segment; that stretch reads SITAILTLMFTCLFLFSVVLRAL. Residues 511–521 lie on the Extracellular side of the membrane; it reads FQDSDPKRFQN. Positions 522–534 form an intramembrane region, helical; Pore-forming; sequence IFTTLFTLFTMLT. Residues 535 to 551 are Extracellular-facing; it reads LDDWSLIYIDNRAQGAW. A helical membrane pass occupies residues 552 to 577; sequence YIIPILMIYIVIQYFIFLNLVIAVLV. Residues 578 to 686 are Cytoplasmic-facing; it reads DNFQMALLKG…FEAGDDDYGK (109 aa).

It belongs to the cation channel sperm-associated (TC 1.A.1.19) family. Component of the CatSper complex or CatSpermasome composed of the core pore-forming members CATSPER1, CATSPER2, CATSPER3 and CATSPER4 as well as auxiliary members CATSPERB, CATSPERG2, CATSPERD, CATSPERE, CATSPERZ, C2CD6/CATSPERT, SLCO6C1, TMEM249, TMEM262 and EFCAB9. HSPA1 may be an additional auxiliary complex member. The core complex members CATSPER1, CATSPER2, CATSPER3 and CATSPER4 form a heterotetrameric channel. The auxiliary CATSPERB, CATSPERG2, CATSPERD and CATSPERE subunits form a pavilion-like structure over the pore which stabilizes the complex through interactions with CATSPER4, CATSPER3, CATSPER1 and CATSPER2 respectively. SLCO6C1 interacts with CATSPERE, and TMEM262/CATSPERH interacts with CATSPERB, further stabilizing the complex. C2CD6/CATSPERT interacts at least with CATSPERD and is required for targeting the CatSper complex in the flagellar membrane. Interacts with Ca(v)3.3/CACNA1I, leading to suppression of T-type calcium channel activity. As to expression, testis-specific.

It localises to the cell projection. The protein resides in the cilium. The protein localises to the flagellum membrane. The enzyme catalyses Ca(2+)(in) = Ca(2+)(out). Its activity is regulated as follows. Activated by intracellular alkalinization. In contrast to the human ortholog, not activated by progesterone. Functionally, pore-forming subunit of the CatSper complex, a sperm-specific voltage-gated calcium channel that plays a central role in sperm cell hyperactivation. Controls calcium entry to mediate the hyperactivated motility, a step needed for sperm motility which is essential late in the preparation of sperm for fertilization. The sequence is that of Cation channel sperm-associated protein 1 (Catsper1) from Mus musculus (Mouse).